The primary structure comprises 157 residues: Small ribosomal subunit protein uS7 (157 aa).

This sequence belongs to the universal ribosomal protein uS7 family. In terms of assembly, part of the 30S ribosomal subunit. Contacts proteins S9 and S11.

Its function is as follows. One of the primary rRNA binding proteins, it binds directly to 16S rRNA where it nucleates assembly of the head domain of the 30S subunit. Is located at the subunit interface close to the decoding center, probably blocks exit of the E-site tRNA. This chain is Small ribosomal subunit protein uS7, found in Borrelia hermsii (strain HS1 / DAH).